The primary structure comprises 130 residues: Anti-adapter protein IraD (130 aa).

The protein belongs to the GpW/Gp25 family. IraD subfamily. Interacts with RssB.

The protein resides in the cytoplasm. Functionally, inhibits RpoS proteolysis by regulating RssB activity, thereby increasing the stability of the sigma stress factor RpoS during oxidative stress. Its effect on RpoS stability is due to its interaction with RssB, which probably blocks the interaction of RssB with RpoS, and the consequent delivery of the RssB-RpoS complex to the ClpXP protein degradation pathway. This is Anti-adapter protein IraD from Escherichia coli O9:H4 (strain HS).